Reading from the N-terminus, the 70-residue chain is MPVKKGEMVRAIREKLENSVEAKASDTRFPAYLFETKGEVVDIKGDYALVMFGQVPTPNIWLRLDQIESF.

This sequence belongs to the complex I NdhO subunit family. As to quaternary structure, NDH-1 can be composed of about 15 different subunits; different subcomplexes with different compositions have been identified which probably have different functions.

The protein resides in the cellular thylakoid membrane. It catalyses the reaction a plastoquinone + NADH + (n+1) H(+)(in) = a plastoquinol + NAD(+) + n H(+)(out). The enzyme catalyses a plastoquinone + NADPH + (n+1) H(+)(in) = a plastoquinol + NADP(+) + n H(+)(out). In terms of biological role, NDH-1 shuttles electrons from an unknown electron donor, via FMN and iron-sulfur (Fe-S) centers, to quinones in the respiratory and/or the photosynthetic chain. The immediate electron acceptor for the enzyme in this species is believed to be plastoquinone. Couples the redox reaction to proton translocation, and thus conserves the redox energy in a proton gradient. Cyanobacterial NDH-1 also plays a role in inorganic carbon-concentration. The protein is NAD(P)H-quinone oxidoreductase subunit O of Nostoc sp. (strain PCC 7120 / SAG 25.82 / UTEX 2576).